A 283-amino-acid polypeptide reads, in one-letter code: Light-independent protochlorophyllide reductase iron-sulfur ATP-binding protein (283 aa).

ATP is bound by residues 15-20 and Lys-44; that span reads GIGKST. Ser-19 serves as a coordination point for Mg(2+). [4Fe-4S] cluster contacts are provided by Cys-100 and Cys-134. 185–186 serves as a coordination point for ATP; the sequence is NR.

The protein belongs to the NifH/BchL/ChlL family. Homodimer. Protochlorophyllide reductase is composed of three subunits; ChlL, ChlN and ChlB. Requires [4Fe-4S] cluster as cofactor.

The catalysed reaction is chlorophyllide a + oxidized 2[4Fe-4S]-[ferredoxin] + 2 ADP + 2 phosphate = protochlorophyllide a + reduced 2[4Fe-4S]-[ferredoxin] + 2 ATP + 2 H2O. It functions in the pathway porphyrin-containing compound metabolism; chlorophyll biosynthesis (light-independent). Its function is as follows. Component of the dark-operative protochlorophyllide reductase (DPOR) that uses Mg-ATP and reduced ferredoxin to reduce ring D of protochlorophyllide (Pchlide) to form chlorophyllide a (Chlide). This reaction is light-independent. The L component serves as a unique electron donor to the NB-component of the complex, and binds Mg-ATP. The sequence is that of Light-independent protochlorophyllide reductase iron-sulfur ATP-binding protein from Synechococcus sp. (strain JA-2-3B'a(2-13)) (Cyanobacteria bacterium Yellowstone B-Prime).